Consider the following 161-residue polypeptide: MSGHGAPAPAPVDCSDLRVAVVAASWHTQVMDGLIAGAQRALADYHVAEHRLVRVPGAFELAVVADALARQHYDVVVALGVVIRGGTPHFDYVCQAVTEGLVRVALDRSLPVGFGVLTCDGDQQALDRAGLEGSKEDKGYEATSAALLTARTLKELGTTAP.

5-amino-6-(D-ribitylamino)uracil-binding positions include W26, 58–60, and 81–83; these read AFE and VVI. A (2S)-2-hydroxy-3-oxobutyl phosphate-binding site is contributed by 86 to 87; the sequence is GT. The active-site Proton donor is H89. F114 provides a ligand contact to 5-amino-6-(D-ribitylamino)uracil. R128 is a binding site for (2S)-2-hydroxy-3-oxobutyl phosphate.

This sequence belongs to the DMRL synthase family.

It carries out the reaction (2S)-2-hydroxy-3-oxobutyl phosphate + 5-amino-6-(D-ribitylamino)uracil = 6,7-dimethyl-8-(1-D-ribityl)lumazine + phosphate + 2 H2O + H(+). The protein operates within cofactor biosynthesis; riboflavin biosynthesis; riboflavin from 2-hydroxy-3-oxobutyl phosphate and 5-amino-6-(D-ribitylamino)uracil: step 1/2. Catalyzes the formation of 6,7-dimethyl-8-ribityllumazine by condensation of 5-amino-6-(D-ribitylamino)uracil with 3,4-dihydroxy-2-butanone 4-phosphate. This is the penultimate step in the biosynthesis of riboflavin. This is 6,7-dimethyl-8-ribityllumazine synthase from Nocardioides sp. (strain ATCC BAA-499 / JS614).